The following is a 456-amino-acid chain: RuvB-like helicase 1 (456 aa).

71–78 (GGAGTGKT) serves as a coordination point for ATP.

The protein belongs to the RuvB family. As to quaternary structure, may form heterododecamers with RVB2. Component of the SWR1 chromatin remodeling complex, the INO80 chromatin remodeling complex, and of the R2TP complex.

Its subcellular location is the nucleus. It carries out the reaction ATP + H2O = ADP + phosphate + H(+). DNA helicase which participates in several chromatin remodeling complexes, including the SWR1 and the INO80 complexes. The SWR1 complex mediates the ATP-dependent exchange of histone H2A for the H2A variant HZT1 leading to transcriptional regulation of selected genes by chromatin remodeling. The INO80 complex remodels chromatin by shifting nucleosomes and is involved in DNA repair. Also involved in pre-rRNA processing. The polypeptide is RuvB-like helicase 1 (rvb1) (Schizosaccharomyces pombe (strain 972 / ATCC 24843) (Fission yeast)).